The primary structure comprises 25 residues: Ocellatin-P1 (25 aa).

Leucine 25 carries the leucine amide modification.

Expressed by the skin glands.

The protein localises to the secreted. Its function is as follows. Antibacterial peptide that inhibits reference strains of both Gram-negative bacteria (E.coli, E.cloacae, K.pneumoniae, P.aeruginosa) and Gram-positive bacteria (S.aureus, S.epidermidis, E.faecalis, Streptococcus group B) with relatively low potencies (MIC=25-200 uM). The peptide shows very low hemolytic activity against human erythrocytes. Wheel projection demonstrates the amphipathicity of the alpha-helices is low which may explain the low antibacterial potency. The chain is Ocellatin-P1 from Leptodactylus pentadactylus (Smokey jungle frog).